We begin with the raw amino-acid sequence, 249 residues long: ATP synthase subunit a, chloroplastic (249 aa).

The next 5 membrane-spanning stretches (helical) occupy residues 40 to 60 (QVLI…VIAI), 97 to 117 (VPFI…GALL), 136 to 156 (INTT…AGLS), 201 to 221 (LVVV…VMFL), and 222 to 242 (GLFT…AYIG).

It belongs to the ATPase A chain family. As to quaternary structure, F-type ATPases have 2 components, CF(1) - the catalytic core - and CF(0) - the membrane proton channel. CF(1) has five subunits: alpha(3), beta(3), gamma(1), delta(1), epsilon(1). CF(0) has four main subunits: a, b, b' and c.

The protein localises to the plastid. It localises to the chloroplast thylakoid membrane. In terms of biological role, key component of the proton channel; it plays a direct role in the translocation of protons across the membrane. The polypeptide is ATP synthase subunit a, chloroplastic (Barbarea verna (Land cress)).